Consider the following 1166-residue polypeptide: Tectonin beta-propeller repeat-containing protein 1 (1166 aa).

TECPR repeat units lie at residues 209-240 (LSVW…SLVE), 254-285 (DLIW…SMVE), 301-332 (SVVW…IEMV), and 344-376 (DQVW…KAIV). 5 positions are modified to phosphoserine: S386, S388, S391, S413, and S418. The segment at 404-496 (RGSGTESAPS…PAELPWTNID (93 aa)) is disordered. Residues 407 to 416 (GTESAPSDTD) show a composition bias toward polar residues. Residues 451 to 462 (TSGNTDHSTENA) are compositionally biased toward polar residues. Positions 466–481 (EGKEKAPETSRSDECR) are enriched in basic and acidic residues. Residues 616–722 (KTGALQWWCD…WLALLSLSCC (107 aa)) form the PH domain. The TECPR 5 repeat unit spans residues 734–761 (QAIWSVTCKGDIFVSEPSPDLEARERLL). Residue S943 is modified to Phosphoserine. 4 TECPR repeats span residues 958-989 (VALW…LHVG), 1003-1034 (YQVW…YHIP), 1049-1080 (TSVY…EHVS), and 1092-1132 (DQVW…DYGI).

Belongs to the TECPR1 family. As to quaternary structure, interacts with ATG5; the interaction is direct. Interacts with WIPI2. Interacts with the ATG5-ATG12 conjugate, the interaction is however mutually exclusive with ATG16, since it does not interact with ATG12-ATG5-ATG16 complex.

The protein resides in the cytoplasmic vesicle. It localises to the autophagosome membrane. The protein localises to the lysosome membrane. Functionally, tethering factor involved in autophagy. Involved in autophagosome maturation by promoting the autophagosome fusion with lysosomes: acts by associating with both the ATG5-ATG12 conjugate and phosphatidylinositol-3-phosphate (PtdIns(3)P) present at the surface of autophagosomes. Also involved in selective autophagy against bacterial pathogens, by being required for phagophore/preautophagosomal structure biogenesis and maturation. This is Tectonin beta-propeller repeat-containing protein 1 (Tecpr1) from Mus musculus (Mouse).